The following is a 765-amino-acid chain: ATP-dependent RNA helicase DBP4 (765 aa).

The Q motif signature appears at 48-76; the sequence is SQFSDLPITENTLKGLKEATFVSLTDIQK. The Helicase ATP-binding domain occupies 79–253; sequence IPIALKGEDL…RLSLTNPNKI (175 aa). An ATP-binding site is contributed by 92 to 99; it reads ARTGSGKT. A DEAD box motif is present at residues 201–204; sequence DEAD. The 173-residue stretch at 267–439 folds into the Helicase C-terminal domain; that stretch reads SLEQYYVKVP…SIRPQLQSLC (173 aa). Basic and acidic residues-rich tracts occupy residues 655–668 and 720–738; these read KISD…ERQK and PVSK…KSKN. The tract at residues 655–765 is disordered; that stretch reads KISDITDKEV…ESLTARLIGN (111 aa). Over residues 744–756 the composition is skewed to acidic residues; sequence VEYDEPETLEDLE.

It belongs to the DEAD box helicase family. DDX10/DBP4 subfamily. In terms of assembly, interacts with the U3 and U14 snoRNAs. Associates with pre-ribosomal complexes.

It localises to the nucleus. The protein resides in the nucleolus. It catalyses the reaction ATP + H2O = ADP + phosphate + H(+). ATP-dependent RNA helicase required for ribosome biogenesis. Involved in the release of U14 snoRNA in pre-ribosomal complexes. Required for pre-rRNA cleavage at site A2. This is ATP-dependent RNA helicase DBP4 (DBP4) from Candida albicans (strain SC5314 / ATCC MYA-2876) (Yeast).